Reading from the N-terminus, the 234-residue chain is Large ribosomal subunit protein uL1 (234 aa).

Belongs to the universal ribosomal protein uL1 family. Part of the 50S ribosomal subunit.

Its function is as follows. Binds directly to 23S rRNA. The L1 stalk is quite mobile in the ribosome, and is involved in E site tRNA release. Functionally, protein L1 is also a translational repressor protein, it controls the translation of the L11 operon by binding to its mRNA. The chain is Large ribosomal subunit protein uL1 from Salmonella arizonae (strain ATCC BAA-731 / CDC346-86 / RSK2980).